Reading from the N-terminus, the 395-residue chain is MTEPANNHPSPPPQNWLFKWWNSLNAITRLLVLVLGAPLMVLNARALSSIFGYFESLFVISLIASVIAFLLNYPVAWLEKQGAKRFVAASFVFLTALIIFTALGVTLIPLALSQAQQLVARLPDWLDSGQKQLVLLDQKAEILGWPVNFDGLIPQINSRLAAELQNLAGSTLNLALSLTVFTVVRLLDVLLTIILTFYLLLHTDDVWQSIIGWLPERFQKPFSDTLRRSFQNYFLGQLVSATCMALGLISGFLLLKVPFGLLFGLTVGVMALIPFGGSVGIVLVTFLVALRDIGMALQLLAVALVIQQIVENGIAPRVLGSVTGLNPFWVLISLLTGARIGGLLGVIVAVPSAVMIKEALGAIRSMKPLVPAPDHNQDPLYFKNQEEVQPLPPRP.

8 consecutive transmembrane segments (helical) span residues 24–44 (LNAI…VLNA), 50–70 (IFGY…IAFL), 91–111 (FVFL…IPLA), 180–200 (VFTV…FYLL), 245–265 (ALGL…LFGL), 269–289 (VMAL…FLVA), 295–315 (MALQ…NGIA), and 328–348 (FWVL…GVIV).

It belongs to the autoinducer-2 exporter (AI-2E) (TC 2.A.86) family.

It localises to the cell membrane. This chain is Putative transport protein sll0063, found in Synechocystis sp. (strain ATCC 27184 / PCC 6803 / Kazusa).